The sequence spans 124 residues: Colorectal cancer-associated protein 1 (124 aa).

Residues 77 to 97 traverse the membrane as a helical segment; it reads LYGCFCVGLVSGMAISVLLLA.

As to expression, expressed in gastrointestinal and immune tissue, as well as prostate, testis and ovary. Expressed in lamina propria and eosinophils but not in epithelial cells. Expression is greater in benign adjacent tissues than in colon tumors.

Its subcellular location is the membrane. The protein is Colorectal cancer-associated protein 1 (COLCA1) of Homo sapiens (Human).